The following is an 891-amino-acid chain: MLPTEVPQSHPGPSALLLLQLLLPPTSAFFPNIWSLLAAPGSITHQDLTEEAALNVTLQLFLEQPPPGRPPLRLEDFLGRTLLADDLFAAYFGPGSSRRFRAALGEVSRANAAQDFLPTSRNDPDLHFDAERLGQGRARLVGALRETVVAARALDHTLARQRLGAALHALQDFYSHSNWVELGEQQPHPHLLWPRQELQNLAQVADPTCSDCEELSCPRNWLGFTLLTSGYFGTHPPKPPGKCSHGGHFDRSSSQPPRGGINKDSTSPGFSPHHMLHLQAAKLALLASIQAFSLLRSRLGDRDFSRLLDITPASSLSFVLDTTGSMGEEINAAKIQARHLVEQRRGSPMEPVHYVLVPFHDPGFGPVFTTSDPDSFWQQLNEIHALGGGDEPEMCLSALQLALLHTPPLSDIFVFTDASPKDAFLTNQVESLTQERRCRVTFLVTEDTSRVQGRARREILSPLRFEPYKAVALASGGEVIFTKDQHIRDVAAIVGESMAALVTLPLDPPVVVPGQPLVFSVDGLLQKITVRIHGDISSFWIKNPAGVSQGQEEGGGPLGHTRRFGQFWMVTMDDPPQTGTWEIQVTAEDTPGVRVQAQTSLDFLFHFGIPMEDGPHPGLYPLTQPVAGLQTQLLVEVTGLGSRANPGDPQPHFSHVILRGVPEGAELGQVPLEPVGPPERGLLAASLSPTLLSTPRPFSLELIGQDAAGRRLHRAAPQPSTVVPVLLELSGPSGFLAPGSKVPLSLRIASFSGPQDLDLRTFVNPSFSLTSNLSRAHLELNESAWGRLWLEVPDSAAPDSVVMVTVTAGGREANPVPPTHAFLRLLVSAPAPQDRHTTPTGSSDPILTTATPAFSPFTLVTQGRAGAGLAAGSPWWGTVGGVLLLLGLASW.

The first 28 residues, M1 to A28, serve as a signal peptide directing secretion. An N-linked (GlcNAc...) asparagine glycan is attached at N55. Residues P237–P272 form a disordered region. A VWFA domain is found at A313–L506.

Expressed at low level in different cell lines.

Its subcellular location is the secreted. This Homo sapiens (Human) protein is von Willebrand factor A domain-containing protein 7 (VWA7).